A 666-amino-acid chain; its full sequence is Putative cysteine-rich receptor-like protein kinase 20 (666 aa).

Residues 1–23 form the signal peptide; the sequence is MSSLICFIFLFLFSFITSFTASA. At 24 to 264 the chain is on the extracellular side; it reads QNPFYLYHNC…PRPGKGGNSS (241 aa). Gnk2-homologous domains follow at residues 27–131 and 137–241; these read FYLY…NRNI and TDGG…NYEF. Residues asparagine 32, asparagine 42, asparagine 60, asparagine 69, and asparagine 103 are each glycosylated (N-linked (GlcNAc...) asparagine). Asparagine 262 carries an N-linked (GlcNAc...) asparagine glycan. A helical transmembrane segment spans residues 265–285; that stretch reads VIVIAVVVPITVLFLLFVAFF. At 286-666 the chain is on the cytoplasmic side; sequence SVRRAKRKKT…EASITSVAPR (381 aa). One can recognise a Protein kinase domain in the interval 344–623; sequence FLPINKLGQG…QMLTTSSIAL (280 aa). Residues 350–358 and lysine 372 each bind ATP; that span reads LGQGGFGEV. Position 417 is a phosphotyrosine (tyrosine 417). Aspartate 469 functions as the Proton acceptor in the catalytic mechanism. A Phosphothreonine modification is found at threonine 509. Residue tyrosine 517 is modified to Phosphotyrosine.

It belongs to the protein kinase superfamily. Ser/Thr protein kinase family. CRK subfamily.

It is found in the membrane. It carries out the reaction L-seryl-[protein] + ATP = O-phospho-L-seryl-[protein] + ADP + H(+). The enzyme catalyses L-threonyl-[protein] + ATP = O-phospho-L-threonyl-[protein] + ADP + H(+). This Arabidopsis thaliana (Mouse-ear cress) protein is Putative cysteine-rich receptor-like protein kinase 20 (CRK20).